We begin with the raw amino-acid sequence, 223 residues long: Pyridoxine/pyridoxamine 5'-phosphate oxidase (223 aa).

Substrate-binding positions include 13 to 16 and lysine 73; that span reads RKNY. FMN-binding positions include 68–73, 83–84, lysine 90, and glutamine 112; these read RIVLLK and YT. Residues tyrosine 130, arginine 134, and serine 138 each coordinate substrate. FMN contacts are provided by residues 147 to 148 and tryptophan 193; that span reads QS. Residue 199–201 participates in substrate binding; that stretch reads RLH. FMN is bound at residue arginine 203.

This sequence belongs to the pyridoxamine 5'-phosphate oxidase family. As to quaternary structure, homodimer. FMN serves as cofactor.

The catalysed reaction is pyridoxamine 5'-phosphate + O2 + H2O = pyridoxal 5'-phosphate + H2O2 + NH4(+). The enzyme catalyses pyridoxine 5'-phosphate + O2 = pyridoxal 5'-phosphate + H2O2. Its pathway is cofactor metabolism; pyridoxal 5'-phosphate salvage; pyridoxal 5'-phosphate from pyridoxamine 5'-phosphate: step 1/1. It participates in cofactor metabolism; pyridoxal 5'-phosphate salvage; pyridoxal 5'-phosphate from pyridoxine 5'-phosphate: step 1/1. Its function is as follows. Catalyzes the oxidation of either pyridoxine 5'-phosphate (PNP) or pyridoxamine 5'-phosphate (PMP) into pyridoxal 5'-phosphate (PLP). The sequence is that of Pyridoxine/pyridoxamine 5'-phosphate oxidase from Rhodopirellula baltica (strain DSM 10527 / NCIMB 13988 / SH1).